The primary structure comprises 790 residues: Sodium- and chloride-dependent glycine transporter 2 (790 aa).

The tract at residues 1-39 is disordered; it reads MDYVNVVDGSKKTMNSPEGAAPGLIGATGITNPTPDNDL. At 1–192 the chain is on the cytoplasmic side; the sequence is MDYVNVVDGS…ARGNWSNKLD (192 aa). 3 helical membrane passes run 193–213, 220–240, and 264–284; these read FILS…FPYL, GAFL…IFYL, and GCGI…NIIM. Positions 199, 201, 202, and 206 each coordinate Na(+). Residues 285-387 are Extracellular-facing; sequence CYTIFYLFAS…GIEYPGEIRW (103 aa). Cys304 and Cys313 are joined by a disulfide. N-linked (GlcNAc...) asparagine glycosylation is found at Asn336, Asn346, Asn351, and Asn357. Helical transmembrane passes span 388 to 408, 427 to 447, and 463 to 483; these read PLVF…AKGI, VILL…WWFI, and AATQ…TLSS. 2 residues coordinate Na(+): Ser470 and Asn502. 6 helical membrane passes run 504–524, 556–576, 597–617, 631–651, 672–692, and 708–728; these read ATSI…AHIL, WAII…FATI, LFTL…ITQG, SYSL…IYGL, ICWA…SFYQ, and MVMG…MFVI. Na(+) contacts are provided by Leu567 and Asp570. Residues 729–790 are Cytoplasmic-facing; sequence KMFLAPGTFI…PKDFELGTQC (62 aa).

This sequence belongs to the sodium:neurotransmitter symporter (SNF) (TC 2.A.22) family. SLC6A5 subfamily. In terms of tissue distribution, first expressed in late neurula stages in the anterior spinal cord, where expression intensifies through the tailbud stages, and by hatching, expression is seen in the hindbrain. During late hatching stages, expression extends along most of the length of the spinal cord, mildly intensifies in the hindbrain, and appears in localized regions of the lateral forebrain and medial midbrain. By the swimming tadpole stage, weak expression appears in the anterior hindbrain, with stronger expression in the posterior, postmitotic neurons.

It is found in the cell membrane. It catalyses the reaction glycine(out) + chloride(out) + 3 Na(+)(out) = glycine(in) + chloride(in) + 3 Na(+)(in). Functionally, sodium- and chloride-dependent glycine transporter. Terminates the action of glycine by its high affinity sodium-dependent reuptake into presynaptic terminals. May be responsible for the termination of neurotransmission at strychnine-sensitive glycinergic synapses. The sequence is that of Sodium- and chloride-dependent glycine transporter 2 from Xenopus laevis (African clawed frog).